A 481-amino-acid chain; its full sequence is Probable squalene synthase (481 aa).

2 consecutive transmembrane segments (helical) span residues 294–314 and 416–436; these read SVFNFVAIPQAMAIATLELVF and FLVLSMIGVLFVMGGLMIGAA.

This sequence belongs to the phytoene/squalene synthase family. It depends on Mg(2+) as a cofactor.

The protein localises to the endoplasmic reticulum membrane. The enzyme catalyses 2 (2E,6E)-farnesyl diphosphate + NADPH + H(+) = squalene + 2 diphosphate + NADP(+). It catalyses the reaction 2 (2E,6E)-farnesyl diphosphate + NADH + H(+) = squalene + 2 diphosphate + NAD(+). Its pathway is terpene metabolism; lanosterol biosynthesis; lanosterol from farnesyl diphosphate: step 1/3. Catalyzes the condensation of 2 two farnesyl pyrophosphate moieties to form squalene. It is the first committed enzyme of the sterol biosynthesis pathway. Required for the biosynthesis of ergosterol. This is Probable squalene synthase (erg-6) from Neurospora crassa (strain ATCC 24698 / 74-OR23-1A / CBS 708.71 / DSM 1257 / FGSC 987).